A 45-amino-acid chain; its full sequence is Large ribosomal subunit protein bL34 (45 aa).

The tract at residues 1–45 is disordered; the sequence is MTKRTFGGTSRKRKRVSGFRVRMRTHTGRSVIRSRRKKGRSRIAV. Basic residues predominate over residues 10 to 45; sequence SRKRKRVSGFRVRMRTHTGRSVIRSRRKKGRSRIAV.

This sequence belongs to the bacterial ribosomal protein bL34 family.

The polypeptide is Large ribosomal subunit protein bL34 (Prochlorococcus marinus (strain SARG / CCMP1375 / SS120)).